Here is a 524-residue protein sequence, read N- to C-terminus: Nif-specific regulatory protein (524 aa).

Residues 1–182 (MIHKSDSDTT…AQTIRLMILP (182 aa)) are a domain. The GAF domain maps to 35 to 176 (EASKTLQEVL…TVANLIAQTI (142 aa)). The region spanning 212 to 481 (MVGKSPAMRQ…DGWLDNSLDE (270 aa)) is the Sigma-54 factor interaction domain. Residues 240–247 (GESGTGKE) and 303–312 (ADGGTLFLDE) each bind ATP. Residues 482-524 (RQRLIAALEKAGWVQAKAARLLGMTPRQVAYRIQIMDITMPRL) are C-terminal DNA-binding domain. Residues 496–515 (QAKAARLLGMTPRQVAYRIQ) constitute a DNA-binding region (H-T-H motif).

Interacts with sigma-54.

In terms of biological role, required for activation of most nif operons, which are directly involved in nitrogen fixation. This is Nif-specific regulatory protein (nifA) from Klebsiella pneumoniae.